Consider the following 432-residue polypeptide: Adenylosuccinate synthetase (432 aa).

Residues 13–19 (GDEGKGK) and 41–43 (GHT) each bind GTP. Residue aspartate 14 is the Proton acceptor of the active site. Residues aspartate 14 and glycine 41 each contribute to the Mg(2+) site. IMP-binding positions include 14–17 (DEGK), 39–42 (NAGH), threonine 130, arginine 144, glutamine 225, threonine 240, and arginine 304. Catalysis depends on histidine 42, which acts as the Proton donor. 300–306 (ATTGRSR) serves as a coordination point for substrate. Residues arginine 306, 332–334 (KLD), and 415–417 (STG) each bind GTP.

This sequence belongs to the adenylosuccinate synthetase family. In terms of assembly, homodimer. Mg(2+) serves as cofactor.

The protein resides in the cytoplasm. It carries out the reaction IMP + L-aspartate + GTP = N(6)-(1,2-dicarboxyethyl)-AMP + GDP + phosphate + 2 H(+). The protein operates within purine metabolism; AMP biosynthesis via de novo pathway; AMP from IMP: step 1/2. Plays an important role in the de novo pathway of purine nucleotide biosynthesis. Catalyzes the first committed step in the biosynthesis of AMP from IMP. The sequence is that of Adenylosuccinate synthetase from Proteus mirabilis (strain HI4320).